Consider the following 245-residue polypeptide: S-methyl-5'-thioinosine phosphorylase (245 aa).

Phosphate is bound by residues Thr-10 and 52–53 (RH). Met-185 provides a ligand contact to substrate. Residue Thr-186 participates in phosphate binding. 209 to 211 (NPA) is a substrate binding site.

Belongs to the PNP/MTAP phosphorylase family. MTAP subfamily. In terms of assembly, homotrimer.

It catalyses the reaction S-methyl-5'-thioinosine + phosphate = 5-(methylsulfanyl)-alpha-D-ribose 1-phosphate + hypoxanthine. Its pathway is purine metabolism; purine nucleoside salvage. Its function is as follows. Catalyzes the reversible phosphorylation of S-methyl-5'-thioinosine (MTI) to hypoxanthine and 5-methylthioribose-1-phosphate. Involved in the breakdown of S-methyl-5'-thioadenosine (MTA), a major by-product of polyamine biosynthesis. Catabolism of (MTA) occurs via deamination to MTI and phosphorolysis to hypoxanthine. Involved in quorum sensing. The sequence is that of S-methyl-5'-thioinosine phosphorylase from Pseudomonas aeruginosa (strain ATCC 15692 / DSM 22644 / CIP 104116 / JCM 14847 / LMG 12228 / 1C / PRS 101 / PAO1).